A 101-amino-acid chain; its full sequence is Large ribosomal subunit protein eL36 (101 aa).

2 disordered regions span residues 1–31 (MGEI…GFLS) and 75–101 (GTHM…SKGE).

It belongs to the eukaryotic ribosomal protein eL36 family.

This chain is Large ribosomal subunit protein eL36 (RL36), found in Ulva compressa (Green alga).